The sequence spans 170 residues: Small ribosomal subunit protein uS5 (170 aa).

An S5 DRBM domain is found at 13–76 (LTEKLIGVNR…DQARRSMVKI (64 aa)).

Belongs to the universal ribosomal protein uS5 family. As to quaternary structure, part of the 30S ribosomal subunit. Contacts proteins S4 and S8.

Its function is as follows. With S4 and S12 plays an important role in translational accuracy. Functionally, located at the back of the 30S subunit body where it stabilizes the conformation of the head with respect to the body. This is Small ribosomal subunit protein uS5 from Laribacter hongkongensis (strain HLHK9).